A 161-amino-acid polypeptide reads, in one-letter code: Pro-corazonin (161 aa).

An N-terminal signal peptide occupies residues 1–20; sequence MMRLLLLPLFLFTLSMACMG. Pyrrolidone carboxylic acid is present on glutamine 21. Residue asparagine 31 is modified to Asparagine amide. Positions 70–161 are excised as a propeptide; it reads LERCLAQLQR…SGEPSVFGKH (92 aa). 2 disordered regions span residues 93–125 and 142–161; these read NANR…TPIQ and VAGS…FGKH. Low complexity predominate over residues 102–117; it reads SDSGSSRNRANNNNEN.

This sequence belongs to the corazonin family.

It localises to the secreted. Cardioactive peptide. Corazonin is probably involved in the physiological regulation of the heart beat. Clock (Clk) and cycle (cyc) proteins negatively regulate Crz transcription in a cell-specific manner. This is Pro-corazonin from Drosophila pseudoobscura pseudoobscura (Fruit fly).